The primary structure comprises 256 residues: Lysine-rich coiled-coil protein 1 (256 aa).

2 disordered regions span residues 62 to 84 and 144 to 256; these read RLPS…EDRV and TIDP…ILGF. Residues 64-79 show a composition bias toward polar residues; it reads PSGTNHSYPRSCSSSQ. Basic and acidic residues-rich tracts occupy residues 161–188 and 218–227; these read HVEE…DLNK and KTRDVSSKKE. Residues 209–247 are a coiled coil; the sequence is EKLKNRKEKKTRDVSSKKEDRKRRKEKKEQGEERTEEEM.

This chain is Lysine-rich coiled-coil protein 1 (Krcc1), found in Mus musculus (Mouse).